A 177-amino-acid polypeptide reads, in one-letter code: Prorelaxin (177 aa).

The first 25 residues, 1 to 25 (MLRWFLSHLLGVWLLLSQLPREIPA), serve as a signal peptide directing secretion. Intrachain disulfides connect cysteine 34–cysteine 164, cysteine 46–cysteine 177, and cysteine 163–cysteine 168. Positions 63 to 149 (QISEPLAEVV…KSLSKLDKHP (87 aa)) are cleaved as a propeptide — connecting peptide.

This sequence belongs to the insulin family. Heterodimer of a B chain and an A chain linked by two disulfide bonds. As to expression, placenta; syncytiotrophoblast.

Its subcellular location is the secreted. Functionally, relaxin is an ovarian hormone that acts with estrogen to produce dilatation of the birth canal in many mammals. The sequence is that of Prorelaxin (RLN) from Canis lupus familiaris (Dog).